We begin with the raw amino-acid sequence, 155 residues long: Anaerobic ribonucleoside-triphosphate reductase-activating protein (155 aa).

Residues cysteine 26, cysteine 30, and cysteine 33 each contribute to the [4Fe-4S] cluster site. Residues 32-34 (GCY) and glycine 74 each bind S-adenosyl-L-methionine.

Belongs to the organic radical-activating enzymes family. As to quaternary structure, forms a tetramer composed of two NrdD and two NrdG subunits. [4Fe-4S] cluster serves as cofactor.

Its subcellular location is the cytoplasm. The catalysed reaction is glycyl-[protein] + reduced [flavodoxin] + S-adenosyl-L-methionine = glycin-2-yl radical-[protein] + semiquinone [flavodoxin] + 5'-deoxyadenosine + L-methionine + H(+). Functionally, activation of anaerobic ribonucleoside-triphosphate reductase under anaerobic conditions by generation of an organic free radical, using S-adenosylmethionine and reduced flavodoxin as cosubstrates to produce 5'-deoxy-adenosine. This chain is Anaerobic ribonucleoside-triphosphate reductase-activating protein (nrdG), found in Haemophilus influenzae (strain ATCC 51907 / DSM 11121 / KW20 / Rd).